A 256-amino-acid polypeptide reads, in one-letter code: 2,3,4,5-tetrahydropyridine-2,6-dicarboxylate N-acetyltransferase (256 aa).

Belongs to the transferase hexapeptide repeat family. DapH subfamily.

It catalyses the reaction (S)-2,3,4,5-tetrahydrodipicolinate + acetyl-CoA + H2O = L-2-acetamido-6-oxoheptanedioate + CoA. The protein operates within amino-acid biosynthesis; L-lysine biosynthesis via DAP pathway; LL-2,6-diaminopimelate from (S)-tetrahydrodipicolinate (acetylase route): step 1/3. Functionally, catalyzes the transfer of an acetyl group from acetyl-CoA to tetrahydrodipicolinate. The chain is 2,3,4,5-tetrahydropyridine-2,6-dicarboxylate N-acetyltransferase from Lactococcus lactis subsp. lactis (strain IL1403) (Streptococcus lactis).